The primary structure comprises 155 residues: MPRRREVPKRKVLPDPKYGSEVLTKFVNMVMSDGKRSVAERILYGALERIGSKHDDPIEVMETALENVKPRVEVKSRRVGGATYQVPVEVRPERRQTLAMRWLLEAARKRGEKTMAARMANEMLEAAESRGTAVKKREDTHRMAEANKAFSHYRW.

It belongs to the universal ribosomal protein uS7 family. As to quaternary structure, part of the 30S ribosomal subunit. Contacts proteins S9 and S11.

Its function is as follows. One of the primary rRNA binding proteins, it binds directly to 16S rRNA where it nucleates assembly of the head domain of the 30S subunit. Is located at the subunit interface close to the decoding center, probably blocks exit of the E-site tRNA. The sequence is that of Small ribosomal subunit protein uS7 from Halorhodospira halophila (strain DSM 244 / SL1) (Ectothiorhodospira halophila (strain DSM 244 / SL1)).